Consider the following 201-residue polypeptide: ADP-ribosylation factor-related protein 1 (201 aa).

An N-acetylmethionine modification is found at Met1. GTP-binding positions include 24–31 (GLDNAGKT), 75–79 (DLGGQ), and 134–137 (NKQD).

This sequence belongs to the small GTPase superfamily. Arf family. In terms of assembly, interacts with SYS1.

The protein resides in the golgi apparatus. It is found in the trans-Golgi network. Its function is as follows. Trans-Golgi-associated GTPase that regulates protein sorting. Controls the targeting of ARL1 and its effector to the trans-Golgi. Required for the lipidation of chylomicrons in the intestine and required for VLDL lipidation in the liver. This Mus musculus (Mouse) protein is ADP-ribosylation factor-related protein 1 (Arfrp1).